The chain runs to 1479 residues: DNA-directed RNA polymerase subunit beta'' (1479 aa).

C220, C296, C303, and C306 together coordinate Zn(2+). Disordered regions lie at residues 618-640 (TRAE…REDE) and 663-756 (LEDE…KKEG). 3 stretches are compositionally biased toward acidic residues: residues 622-631 (DSEEEYETLE), 704-717 (DEYG…EDEY), and 731-749 (LEED…PEED).

It belongs to the RNA polymerase beta' chain family. RpoC2 subfamily. As to quaternary structure, in plastids the minimal PEP RNA polymerase catalytic core is composed of four subunits: alpha, beta, beta', and beta''. When a (nuclear-encoded) sigma factor is associated with the core the holoenzyme is formed, which can initiate transcription. It depends on Zn(2+) as a cofactor.

It localises to the plastid. Its subcellular location is the chloroplast. It carries out the reaction RNA(n) + a ribonucleoside 5'-triphosphate = RNA(n+1) + diphosphate. In terms of biological role, DNA-dependent RNA polymerase catalyzes the transcription of DNA into RNA using the four ribonucleoside triphosphates as substrates. This chain is DNA-directed RNA polymerase subunit beta'', found in Triticum aestivum (Wheat).